The following is a 258-amino-acid chain: Ribosomal RNA small subunit methyltransferase J (258 aa).

S-adenosyl-L-methionine contacts are provided by residues 111–112 (RD), 127–128 (ER), and Asp179.

Belongs to the methyltransferase superfamily. RsmJ family.

The protein resides in the cytoplasm. It catalyses the reaction guanosine(1516) in 16S rRNA + S-adenosyl-L-methionine = N(2)-methylguanosine(1516) in 16S rRNA + S-adenosyl-L-homocysteine + H(+). Functionally, specifically methylates the guanosine in position 1516 of 16S rRNA. This chain is Ribosomal RNA small subunit methyltransferase J, found in Alteromonas mediterranea (strain DSM 17117 / CIP 110805 / LMG 28347 / Deep ecotype).